Here is a 425-residue protein sequence, read N- to C-terminus: Glucose-1-phosphate adenylyltransferase (425 aa).

Alpha-D-glucose 1-phosphate-binding positions include Tyr-109, Gly-175, 190 to 191, and Ser-208; that span reads EK.

It belongs to the bacterial/plant glucose-1-phosphate adenylyltransferase family. In terms of assembly, homotetramer.

The catalysed reaction is alpha-D-glucose 1-phosphate + ATP + H(+) = ADP-alpha-D-glucose + diphosphate. The protein operates within glycan biosynthesis; glycogen biosynthesis. Its function is as follows. Involved in the biosynthesis of ADP-glucose, a building block required for the elongation reactions to produce glycogen. Catalyzes the reaction between ATP and alpha-D-glucose 1-phosphate (G1P) to produce pyrophosphate and ADP-Glc. This chain is Glucose-1-phosphate adenylyltransferase, found in Saccharophagus degradans (strain 2-40 / ATCC 43961 / DSM 17024).